The chain runs to 93 residues: YcgL domain-containing protein AHA_2135 (93 aa).

The YcgL domain occupies 1-85 (MLCAVYKSRK…PPENLLEQHK (85 aa)).

This Aeromonas hydrophila subsp. hydrophila (strain ATCC 7966 / DSM 30187 / BCRC 13018 / CCUG 14551 / JCM 1027 / KCTC 2358 / NCIMB 9240 / NCTC 8049) protein is YcgL domain-containing protein AHA_2135.